The primary structure comprises 387 residues: Sedoheptulose-1,7-bisphosphatase, chloroplastic (387 aa).

An intrachain disulfide couples C109 to C114. Residues D120, E149, D170, L172, and D173 each contribute to the Mg(2+) site. Substrate contacts are provided by residues 173-176 (DGSS), Y284, and K314. A Mg(2+)-binding site is contributed by E320.

The protein belongs to the FBPase class 1 family. In terms of assembly, homodimer. Requires Mg(2+) as cofactor.

It localises to the plastid. The protein resides in the chloroplast. It carries out the reaction D-sedoheptulose 1,7-bisphosphate + H2O = D-sedoheptulose 7-phosphate + phosphate. It functions in the pathway carbohydrate biosynthesis; Calvin cycle. The protein is Sedoheptulose-1,7-bisphosphatase, chloroplastic of Spinacia oleracea (Spinach).